The sequence spans 719 residues: MTNHSSKILVIESPNKVKTIKKYLTDDYEIVATVGHIRDLPKYTLGFNTEDFVPKWEIIQEKKPAKGVSATKKAKTVKKAVKNKKEIIDELVDKAKKADEIYLATDPDREGEAISWHVYDVLKEKGVNVNKCKRIIFNEISEKAVKNAIANPREIQKDWVSSQITRRRLDRLIGFKLSSLMKSKINADSAGRVQSIALKFITEREELINKFVPRFWWTLDVILKDGTELMLRKIDEKLKDKLGFKELEEVSGIDFNTKEDAELVKQHLSDKYRVYAIDTPKLKSSYPKEVYKTSTLQQDAINKLKWRSMKITSVAQELYEGVTIDDEQIALISYPRTDSTRLSPEYGKTVLDFVAKTYGKDYVATQSQLNGETKANKKQKAKVQDAHEAIHPIDISITPDSVKNKISSDQYSLYKLIWTRTVAHYMAAAVYELVNIRFINNNNKFYAVNNTLKFDGYKKIYTHYDDKDHLRKLDLNHFAIDKEFEAKDVLLNEHQTKPPARFTQATLIEALETEGIGRPSTYSTILDIVLKRNYAELVNGRYYKTTDLGQKLAFELDKNFPTIINKEFTKNMETTLDEIAQGTVNDVSYLQAFWNDFSEVLNEAKTNIVKKVEYIEGKNCPNCSSQLVRREGRYGPFVGCSNFPKCKFIEKSEQKAKEIVYEEGVKCELCHAKLIRRVAKKKGRNKDNTFLGCSNFPKCKYTKSLEPEKDETIRDSTII.

The 132-residue stretch at 6 to 137 (SKILVIESPN…NVNKCKRIIF (132 aa)) folds into the Toprim domain. Glu-12 and Asp-106 together coordinate Mg(2+). Positions 156–601 (QKDWVSSQIT…AFWNDFSEVL (446 aa)) constitute a Topo IA-type catalytic domain. Residues 189-194 (SAGRVQ) form an interaction with DNA region. The active-site O-(5'-phospho-DNA)-tyrosine intermediate is Tyr-334. C4-type zinc fingers lie at residues 620–646 (CPNC…FPKC) and 667–699 (CELC…FPKC).

The protein belongs to the type IA topoisomerase family. As to quaternary structure, monomer. The cofactor is Mg(2+).

It carries out the reaction ATP-independent breakage of single-stranded DNA, followed by passage and rejoining.. Functionally, releases the supercoiling and torsional tension of DNA, which is introduced during the DNA replication and transcription, by transiently cleaving and rejoining one strand of the DNA duplex. Introduces a single-strand break via transesterification at a target site in duplex DNA. The scissile phosphodiester is attacked by the catalytic tyrosine of the enzyme, resulting in the formation of a DNA-(5'-phosphotyrosyl)-enzyme intermediate and the expulsion of a 3'-OH DNA strand. The free DNA strand then undergoes passage around the unbroken strand, thus removing DNA supercoils. Finally, in the religation step, the DNA 3'-OH attacks the covalent intermediate to expel the active-site tyrosine and restore the DNA phosphodiester backbone. In Mycoplasmoides gallisepticum (strain R(low / passage 15 / clone 2)) (Mycoplasma gallisepticum), this protein is DNA topoisomerase 1.